The primary structure comprises 102 residues: MTQEVDQQILLQQLKSDYRQILLSYFTTDKALKEKIDKFINAVFCANIPVPEIIEIHMELIDEFSKQLRLEGRGDETLMDYRLTLIDILAHLCEAYRGAIFK.

One can recognise a KaiA C-terminal domain in the interval 1–102 (MTQEVDQQIL…CEAYRGAIFK (102 aa)).

The protein belongs to the KaiA family. In terms of assembly, homodimer. The KaiABC complex composition changes during the circadian cycle to control KaiC phosphorylation. Complexes KaiC(6), KaiA(2-4):KaiC(6), KaiB(6):KaiC(6) and KaiC(6):KaiB(6):KaiA(12) are among the most important forms, many form cooperatively. KaiA and CikA bind to the same region of the KaiB(fs) form and therefore compete.

Its function is as follows. Key component of the KaiABC oscillator complex, which constitutes the main circadian regulator in cyanobacteria. Complex composition changes during the circadian cycle to control KaiC phosphorylation. KaiA stimulates KaiC autophosphorylation, while KaiB sequesters KaiA, leading to KaiC autodephosphorylation. KaiA binding to the KaiC CII domain during the subjective day yields KaiA(2-4):KaiC(6) complexes which stimulate KaiC autophosphorylation. Phospho-Ser-431 KaiC accumulation triggers binding of KaiB during the subjective night to form the KaiB(6):KaiC(6) complex, leading to changes in the output regulators CikA and SasA. KaiB(6):KaiC(6) formation exposes a site for KaiA binding on KaiB that sequesters KaiA from KaiC's CII domain, making the KaiC(6):KaiB(6):KaiA(12) complex resulting in KaiC autodephosphorylation. Complete dephosphorylation of KaiC leads to dissociation of KaiA(2):KaiB(1), completing 1 cycle of the Kai oscillator. The chain is Circadian clock oscillator protein KaiA from Nostoc sp. (strain PCC 7120 / SAG 25.82 / UTEX 2576).